Here is a 347-residue protein sequence, read N- to C-terminus: Holliday junction branch migration complex subunit RuvB (347 aa).

The interval glutamine 4–tyrosine 184 is large ATPase domain (RuvB-L). ATP-binding positions include arginine 24, glycine 65, lysine 68, threonine 69, threonine 70, glutamate 131–phenylalanine 133, arginine 174, tyrosine 184, and arginine 221. Threonine 69 lines the Mg(2+) pocket. Residues serine 185–asparagine 255 form a small ATPAse domain (RuvB-S) region. Residues histidine 258–isoleucine 347 form a head domain (RuvB-H) region. Positions 294, 313, and 318 each coordinate DNA.

The protein belongs to the RuvB family. In terms of assembly, homohexamer. Forms an RuvA(8)-RuvB(12)-Holliday junction (HJ) complex. HJ DNA is sandwiched between 2 RuvA tetramers; dsDNA enters through RuvA and exits via RuvB. An RuvB hexamer assembles on each DNA strand where it exits the tetramer. Each RuvB hexamer is contacted by two RuvA subunits (via domain III) on 2 adjacent RuvB subunits; this complex drives branch migration. In the full resolvosome a probable DNA-RuvA(4)-RuvB(12)-RuvC(2) complex forms which resolves the HJ.

It is found in the cytoplasm. The enzyme catalyses ATP + H2O = ADP + phosphate + H(+). The RuvA-RuvB-RuvC complex processes Holliday junction (HJ) DNA during genetic recombination and DNA repair, while the RuvA-RuvB complex plays an important role in the rescue of blocked DNA replication forks via replication fork reversal (RFR). RuvA specifically binds to HJ cruciform DNA, conferring on it an open structure. The RuvB hexamer acts as an ATP-dependent pump, pulling dsDNA into and through the RuvAB complex. RuvB forms 2 homohexamers on either side of HJ DNA bound by 1 or 2 RuvA tetramers; 4 subunits per hexamer contact DNA at a time. Coordinated motions by a converter formed by DNA-disengaged RuvB subunits stimulates ATP hydrolysis and nucleotide exchange. Immobilization of the converter enables RuvB to convert the ATP-contained energy into a lever motion, pulling 2 nucleotides of DNA out of the RuvA tetramer per ATP hydrolyzed, thus driving DNA branch migration. The RuvB motors rotate together with the DNA substrate, which together with the progressing nucleotide cycle form the mechanistic basis for DNA recombination by continuous HJ branch migration. Branch migration allows RuvC to scan DNA until it finds its consensus sequence, where it cleaves and resolves cruciform DNA. In Teredinibacter turnerae (strain ATCC 39867 / T7901), this protein is Holliday junction branch migration complex subunit RuvB.